Here is a 341-residue protein sequence, read N- to C-terminus: Ribosomal RNA small subunit methyltransferase H (341 aa).

Residues 47–49 (GGY), Asp-64, Phe-91, Asp-109, and Gln-116 each bind S-adenosyl-L-methionine.

The protein belongs to the methyltransferase superfamily. RsmH family.

The protein localises to the cytoplasm. The catalysed reaction is cytidine(1402) in 16S rRNA + S-adenosyl-L-methionine = N(4)-methylcytidine(1402) in 16S rRNA + S-adenosyl-L-homocysteine + H(+). Its function is as follows. Specifically methylates the N4 position of cytidine in position 1402 (C1402) of 16S rRNA. This is Ribosomal RNA small subunit methyltransferase H from Rhizobium rhizogenes (strain K84 / ATCC BAA-868) (Agrobacterium radiobacter).